Reading from the N-terminus, the 416-residue chain is MQLLTLGVNHHTAPLAIREQVAFGPDKLVQALHELTLSKRASEAAILSTCNRTELYVNTVSPDALSQWFADFHHLDVRELAPYLYTLPREKAAQHAFRVAAGLDSMVLGETQILGQMKQAVAAAEEAGTLGLLLHKLFQRTFSVAKEVRSSTEIGANSVSMAAAAVRLAERIFPSVKEQACLFIGAGEMIELCMTHFAAQHPRRMTVANRTTERARPLAERFNAGVIPLTALPDEVAAYDIIITSTASPLPILGKGMLERAIRQRRHRPIFIVDLAVPRDVEAEVADMNDVFLYSVDDLGQVVREGMDNRVAQVAQAEAIIETSVASFIHWMEGRELVPVIRGLRDAAERHRRHELDKAHKALARGDDPHAVLDAMSHGLANKFLHAPTHGLSHATPEERAELVRLISQLYGLHPE.

Residues threonine 49 to arginine 52, serine 105, glutamate 110 to glutamine 112, and glutamine 116 each bind substrate. The active-site Nucleophile is cysteine 50. Residue glycine 185 to isoleucine 190 coordinates NADP(+).

The protein belongs to the glutamyl-tRNA reductase family. In terms of assembly, homodimer.

It carries out the reaction (S)-4-amino-5-oxopentanoate + tRNA(Glu) + NADP(+) = L-glutamyl-tRNA(Glu) + NADPH + H(+). Its pathway is porphyrin-containing compound metabolism; protoporphyrin-IX biosynthesis; 5-aminolevulinate from L-glutamyl-tRNA(Glu): step 1/2. Catalyzes the NADPH-dependent reduction of glutamyl-tRNA(Glu) to glutamate 1-semialdehyde (GSA). This Thiobacillus denitrificans (strain ATCC 25259 / T1) protein is Glutamyl-tRNA reductase.